The sequence spans 124 residues: Fluoride-specific ion channel FluC 1 (124 aa).

4 consecutive transmembrane segments (helical) span residues 1–21 (MCAV…ALGA), 30–50 (LWPG…LLGY), 64–84 (FLGV…VDAV), and 93–113 (LYVV…MLAG). Na(+)-binding residues include glycine 71 and threonine 74.

The protein belongs to the fluoride channel Fluc/FEX (TC 1.A.43) family.

It is found in the cell membrane. The catalysed reaction is fluoride(in) = fluoride(out). With respect to regulation, na(+) is not transported, but it plays an essential structural role and its presence is essential for fluoride channel function. Its function is as follows. Fluoride-specific ion channel. Important for reducing fluoride concentration in the cell, thus reducing its toxicity. This Rhodococcus jostii (strain RHA1) protein is Fluoride-specific ion channel FluC 1.